A 146-amino-acid polypeptide reads, in one-letter code: 3-hydroxyacyl-[acyl-carrier-protein] dehydratase FabZ (146 aa).

The active site involves histidine 49.

It belongs to the thioester dehydratase family. FabZ subfamily.

The protein localises to the cytoplasm. The catalysed reaction is a (3R)-hydroxyacyl-[ACP] = a (2E)-enoyl-[ACP] + H2O. Functionally, involved in unsaturated fatty acids biosynthesis. Catalyzes the dehydration of short chain beta-hydroxyacyl-ACPs and long chain saturated and unsaturated beta-hydroxyacyl-ACPs. This is 3-hydroxyacyl-[acyl-carrier-protein] dehydratase FabZ from Azotobacter vinelandii (strain DJ / ATCC BAA-1303).